A 76-amino-acid chain; its full sequence is DNA-directed RNA polymerase subunit epsilon (76 aa).

Belongs to the RNA polymerase subunit epsilon family. In terms of assembly, RNAP is composed of a core of 2 alpha, a beta and a beta' subunit. The core is associated with a delta subunit, and at least one of epsilon or omega. When a sigma factor is associated with the core the holoenzyme is formed, which can initiate transcription.

The enzyme catalyses RNA(n) + a ribonucleoside 5'-triphosphate = RNA(n+1) + diphosphate. A non-essential component of RNA polymerase (RNAP). The sequence is that of DNA-directed RNA polymerase subunit epsilon from Streptococcus agalactiae serotype Ia (strain ATCC 27591 / A909 / CDC SS700).